A 74-amino-acid polypeptide reads, in one-letter code: Exodeoxyribonuclease 7 small subunit (74 aa).

This sequence belongs to the XseB family. As to quaternary structure, heterooligomer composed of large and small subunits.

Its subcellular location is the cytoplasm. The catalysed reaction is Exonucleolytic cleavage in either 5'- to 3'- or 3'- to 5'-direction to yield nucleoside 5'-phosphates.. Its function is as follows. Bidirectionally degrades single-stranded DNA into large acid-insoluble oligonucleotides, which are then degraded further into small acid-soluble oligonucleotides. The polypeptide is Exodeoxyribonuclease 7 small subunit (Symbiobacterium thermophilum (strain DSM 24528 / JCM 14929 / IAM 14863 / T)).